Consider the following 87-residue polypeptide: uncharacterized protein (87 aa).

Positions 1–19 are cleaved as a signal peptide; the sequence is MLVLQLAVLVTAVYAFVHA. Residues 51–71 traverse the membrane as a helical segment; the sequence is ILGFVFGVLGIVIAACAAGVY.

The protein to M.tuberculosis Rv0476.

It is found in the membrane. This is an uncharacterized protein from Mycobacterium leprae (strain TN).